Consider the following 153-residue polypeptide: Cytochrome c-554 (153 aa).

The signal sequence occupies residues 1-20 (MRPIPALALTFSLVAMPALA). Position 21 is a pyrrolidone carboxylic acid (glutamine 21). Heme c-binding residues include methionine 37, cysteine 142, cysteine 145, and histidine 146.

In terms of processing, binds 1 heme c group covalently per subunit.

Its subcellular location is the periplasm. Its function is as follows. Monoheme c-type cytochrome, that is particularly expressed when cells generate energy via aerobic respiration. This is Cytochrome c-554 (cycF) from Cereibacter sphaeroides (strain ATCC 17023 / DSM 158 / JCM 6121 / CCUG 31486 / LMG 2827 / NBRC 12203 / NCIMB 8253 / ATH 2.4.1.) (Rhodobacter sphaeroides).